Here is a 421-residue protein sequence, read N- to C-terminus: Gamma-glutamyl phosphate reductase (421 aa).

It belongs to the gamma-glutamyl phosphate reductase family.

The protein resides in the cytoplasm. The enzyme catalyses L-glutamate 5-semialdehyde + phosphate + NADP(+) = L-glutamyl 5-phosphate + NADPH + H(+). Its pathway is amino-acid biosynthesis; L-proline biosynthesis; L-glutamate 5-semialdehyde from L-glutamate: step 2/2. Catalyzes the NADPH-dependent reduction of L-glutamate 5-phosphate into L-glutamate 5-semialdehyde and phosphate. The product spontaneously undergoes cyclization to form 1-pyrroline-5-carboxylate. This is Gamma-glutamyl phosphate reductase from Leptospira biflexa serovar Patoc (strain Patoc 1 / ATCC 23582 / Paris).